The chain runs to 625 residues: SWR1-complex protein 3 (625 aa).

Disordered regions lie at residues 1–53, 194–234, 254–273, and 324–434; these read MPAV…EVGN, KELK…KENK, KLKEQNKNKQGSPSSSMHDP, and NPVN…NAIK. Residues 20–31 show a composition bias toward basic residues; it reads SRTRTRSRRGKR. Acidic residues predominate over residues 35 to 53; the sequence is DDDDDDDEESDDAYDEVGN. Basic and acidic residues-rich tracts occupy residues 194–214 and 221–234; these read KELKRKNDAEAKRLRMEERKR and IAKEQKLQLQKENK. Polar residues predominate over residues 261–270; it reads NKQGSPSSSM. The segment covering 342-352 has biased composition (basic and acidic residues); that stretch reads KAKDVAEDHRL. A compositionally biased stretch (polar residues) spans 353-364; the sequence is NSITLVKSSKTA. Basic and acidic residues-rich tracts occupy residues 368-388 and 396-420; these read PEPKKADDENAEKQQSKEAKT and DVKKEEEDVKEKGVKSEDTQKKEDN.

The protein belongs to the SWC3 family. As to quaternary structure, component of the SWR1 chromatin remodeling complex composed of at least ACT1, ARP4, RVB1, RVB2, ARP6, YAF9, VPS71, VPS72, SWC3, SWC4, SWC5, SWC7 and SWR1, and perhaps BDF1.

It localises to the nucleus. Component of the SWR1 complex which mediates the ATP-dependent exchange of histone H2A for the H2A variant HZT1 leading to transcriptional regulation of selected genes by chromatin remodeling. Involved in chromosome stability. In Saccharomyces cerevisiae (strain ATCC 204508 / S288c) (Baker's yeast), this protein is SWR1-complex protein 3 (SWC3).